The chain runs to 358 residues: Neutral protease 2 homolog MEP8 (358 aa).

A signal peptide spans 1-19 (MKLSSILLALAALVSPAFS). A propeptide spanning residues 20–179 (YAISHLPRSE…EKAIKPVDKR (160 aa)) is cleaved from the precursor. 2 disulfides stabilise this stretch: Cys186–Cys256 and Cys263–Cys281. His305 contacts Zn(2+). Residue Glu306 is part of the active site. Zn(2+)-binding residues include His309 and Asp320.

Belongs to the peptidase M35 family. It depends on Zn(2+) as a cofactor.

The protein resides in the secreted. The enzyme catalyses Preferential cleavage of bonds with hydrophobic residues in P1'. Also 3-Asn-|-Gln-4 and 8-Gly-|-Ser-9 bonds in insulin B chain.. Functionally, secreted metalloproteinase that allows assimilation of proteinaceous substrates. Shows high activities on basic nuclear substrates such as histone and protamine. May be involved in virulence. The polypeptide is Neutral protease 2 homolog MEP8 (MEP8) (Coccidioides posadasii (strain C735) (Valley fever fungus)).